A 638-amino-acid polypeptide reads, in one-letter code: 1-deoxy-D-xylulose-5-phosphate synthase (638 aa).

Residues histidine 72 and 113–115 contribute to the thiamine diphosphate site; that span reads GHA. Aspartate 144 serves as a coordination point for Mg(2+). Thiamine diphosphate-binding positions include 145–146, asparagine 174, tyrosine 287, and glutamate 370; that span reads GA. Asparagine 174 contacts Mg(2+).

This sequence belongs to the transketolase family. DXPS subfamily. Homodimer. The cofactor is Mg(2+). Thiamine diphosphate serves as cofactor.

It carries out the reaction D-glyceraldehyde 3-phosphate + pyruvate + H(+) = 1-deoxy-D-xylulose 5-phosphate + CO2. Its pathway is metabolic intermediate biosynthesis; 1-deoxy-D-xylulose 5-phosphate biosynthesis; 1-deoxy-D-xylulose 5-phosphate from D-glyceraldehyde 3-phosphate and pyruvate: step 1/1. Catalyzes the acyloin condensation reaction between C atoms 2 and 3 of pyruvate and glyceraldehyde 3-phosphate to yield 1-deoxy-D-xylulose-5-phosphate (DXP). The protein is 1-deoxy-D-xylulose-5-phosphate synthase of Thermosynechococcus vestitus (strain NIES-2133 / IAM M-273 / BP-1).